A 387-amino-acid polypeptide reads, in one-letter code: Erythronate-4-phosphate dehydrogenase (387 aa).

Residues Ser45 and Thr67 each coordinate substrate. Asp147 provides a ligand contact to NAD(+). The active site involves Arg208. Asp232 is an NAD(+) binding site. The active site involves Glu237. The Proton donor role is filled by His254. Gly257 serves as a coordination point for NAD(+). Tyr258 serves as a coordination point for substrate.

The protein belongs to the D-isomer specific 2-hydroxyacid dehydrogenase family. PdxB subfamily. As to quaternary structure, homodimer.

It is found in the cytoplasm. The enzyme catalyses 4-phospho-D-erythronate + NAD(+) = (R)-3-hydroxy-2-oxo-4-phosphooxybutanoate + NADH + H(+). It participates in cofactor biosynthesis; pyridoxine 5'-phosphate biosynthesis; pyridoxine 5'-phosphate from D-erythrose 4-phosphate: step 2/5. Functionally, catalyzes the oxidation of erythronate-4-phosphate to 3-hydroxy-2-oxo-4-phosphonooxybutanoate. The polypeptide is Erythronate-4-phosphate dehydrogenase (Shewanella sediminis (strain HAW-EB3)).